A 340-amino-acid chain; its full sequence is Putative RRN3-like protein RRN3P2 (340 aa).

Belongs to the RRN3 family.

This Homo sapiens (Human) protein is Putative RRN3-like protein RRN3P2 (RRN3P2).